The primary structure comprises 241 residues: Probable 2-phosphosulfolactate phosphatase (241 aa).

It belongs to the ComB family. Requires Mg(2+) as cofactor.

The enzyme catalyses (2R)-O-phospho-3-sulfolactate + H2O = (2R)-3-sulfolactate + phosphate. This Gloeothece citriformis (strain PCC 7424) (Cyanothece sp. (strain PCC 7424)) protein is Probable 2-phosphosulfolactate phosphatase.